Consider the following 402-residue polypeptide: Bisdemethoxycurcumin synthase (402 aa).

The active-site Acyl-thioester intermediate is Cys174.

Belongs to the thiolase-like superfamily. Chalcone/stilbene synthases family. In terms of assembly, homodimer.

The enzyme catalyses 2 4-coumaroyl-CoA + malonyl-CoA + H2O + H(+) = bisdemethoxycurcumin + 2 CO2 + 3 CoA. The protein operates within secondary metabolite biosynthesis; flavonoid biosynthesis. In terms of biological role, plant-specific type III polyketide synthase (PKS) that catalyzes the one-pot formation of the C6-C7-C6 diarylheptanoid scaffold of bisdemethoxycurcumin by the condensation of two molecules of 4-coumaroyl-CoA and one molecule of malonyl-CoA. In Oryza sativa subsp. japonica (Rice), this protein is Bisdemethoxycurcumin synthase.